The following is a 71-amino-acid chain: Small ribosomal subunit protein bS21 (71 aa).

Belongs to the bacterial ribosomal protein bS21 family.

The chain is Small ribosomal subunit protein bS21 from Blochmanniella pennsylvanica (strain BPEN).